The following is a 342-amino-acid chain: S-adenosylmethionine:tRNA ribosyltransferase-isomerase (342 aa).

It belongs to the QueA family. Monomer.

The protein resides in the cytoplasm. It carries out the reaction 7-aminomethyl-7-carbaguanosine(34) in tRNA + S-adenosyl-L-methionine = epoxyqueuosine(34) in tRNA + adenine + L-methionine + 2 H(+). It functions in the pathway tRNA modification; tRNA-queuosine biosynthesis. Its function is as follows. Transfers and isomerizes the ribose moiety from AdoMet to the 7-aminomethyl group of 7-deazaguanine (preQ1-tRNA) to give epoxyqueuosine (oQ-tRNA). In Sulfurimonas denitrificans (strain ATCC 33889 / DSM 1251) (Thiomicrospira denitrificans (strain ATCC 33889 / DSM 1251)), this protein is S-adenosylmethionine:tRNA ribosyltransferase-isomerase.